The chain runs to 184 residues: UPF0397 protein SAR2767 (184 aa).

5 consecutive transmembrane segments (helical) span residues 11-31 (VVAIGIGAAVFVILGRFVVIP), 44-64 (AFLALISAIFGPFAGLMTGLI), 77-97 (AWWSWVICSGIIGCLYGWIGL), 117-137 (GQIIANIICWALIAPTLDILI), and 148-168 (QGVISAVLNIISVGIIGTILL).

The protein belongs to the UPF0397 family.

The protein localises to the cell membrane. In Staphylococcus aureus (strain MRSA252), this protein is UPF0397 protein SAR2767.